Here is a 269-residue protein sequence, read N- to C-terminus: Sulfur carrier protein FdhD (269 aa).

The active-site Cysteine persulfide intermediate is the Cys-111.

Belongs to the FdhD family.

It is found in the cytoplasm. In terms of biological role, required for formate dehydrogenase (FDH) activity. Acts as a sulfur carrier protein that transfers sulfur from IscS to the molybdenum cofactor prior to its insertion into FDH. The sequence is that of Sulfur carrier protein FdhD from Brucella abortus biovar 1 (strain 9-941).